The primary structure comprises 206 residues: Ras-related protein Rab-18 (206 aa).

The GTP site is built by serine 17, glycine 20, lysine 21, serine 22, serine 23, aspartate 34, proline 35, threonine 40, glycine 66, lysine 123, aspartate 125, and alanine 152. Serine 22 is a Mg(2+) binding site. 2 consecutive short sequence motifs (switch) follow at residues 31-45 and 63-80; these read DTFD…GVDF and DTAG…YYRG. Threonine 40 is a binding site for Mg(2+). Cysteine 199 is lipidated: S-palmitoyl cysteine. Cysteine methyl ester is present on cysteine 203. Cysteine 203 carries the S-geranylgeranyl cysteine lipid modification. The propeptide at 204–206 is removed in mature form; the sequence is SML.

The protein belongs to the small GTPase superfamily. Rab family. It depends on Mg(2+) as a cofactor.

The protein localises to the endoplasmic reticulum membrane. It localises to the golgi apparatus. It is found in the cis-Golgi network membrane. Its subcellular location is the lipid droplet. The protein resides in the apical cell membrane. It carries out the reaction GTP + H2O = GDP + phosphate + H(+). Regulated by guanine nucleotide exchange factors (GEFs) which promote the exchange of bound GDP for free GTP. Regulated by GTPase activating proteins (GAPs) which increase the GTP hydrolysis activity at the ER membrane. Inhibited by GDP dissociation inhibitors (GDIs) which prevent Rab-GDP dissociation. The small GTPases Rab are key regulators of intracellular membrane trafficking, from the formation of transport vesicles to their fusion with membranes. Rabs cycle between an inactive GDP-bound form and an active GTP-bound form that is able to recruit to membranes different sets of downstream effectors directly responsible for vesicle formation, movement, tethering and fusion. RAB18 is required for the localization of ZFYVE1 to lipid droplets and for its function in mediating the formation of endoplasmic reticulum-lipid droplets (ER-LD) contacts. Also required for maintaining endoplasmic reticulum structure. Plays a role in apical endocytosis/recycling. Plays a key role in eye and brain development and neurodegeneration. This is Ras-related protein Rab-18 (RAB18) from Gallus gallus (Chicken).